The following is a 1071-amino-acid chain: SLIT-ROBO Rho GTPase-activating protein 2 (1071 aa).

The F-BAR domain maps to Lys-22–Asp-325. The segment covering Leu-181 to Thr-203 has biased composition (basic and acidic residues). A disordered region spans residues Leu-181–Ala-211. A Phosphoserine modification is found at Ser-206. Residues Val-362–Ile-401 are a coiled coil. Ser-427, Ser-500, Ser-691, and Ser-695 each carry phosphoserine. The Rho-GAP domain maps to Ala-489–Phe-679. Residues Asp-698–Asp-726 form a disordered region. The span at Gly-705–Val-717 shows a compositional bias: polar residues. Phosphoserine is present on Ser-724. Positions Cys-728 to Thr-787 constitute an SH3 domain. Ser-795 is subject to Phosphoserine. The interval Gln-837–Pro-936 is disordered. A compositionally biased stretch (low complexity) spans His-855 to Ser-866. Polar residues-rich tracts occupy residues Arg-874–Leu-885 and Gly-897–His-907. The residue at position 916 (Ser-916) is a Phosphoserine. Over residues Ile-919–Asn-933 the composition is skewed to polar residues. Arg-927 is subject to Symmetric dimethylarginine; by PRMT5. At Ser-930 the chain carries Phosphoserine. A coiled-coil region spans residues Glu-940–Lys-967. The disordered stretch occupies residues Ser-983–Ala-1012. Residues Ser-990, Ser-994, Ser-1013, and Ser-1027 each carry the phosphoserine modification. The interval Lys-1029–Val-1071 is disordered. Residues Pro-1047–Val-1071 show a composition bias toward polar residues.

Homodimer. Heterodimer; forms a heterodimer with SRGAP2C, altering SRGAP2 function. Forms a heterooligomer with SRGAP1 and SRGAP3 through its F-BAR domain. Interacts (via SH3 domain) with GPHN. Interacts (via SH3 domain) with FMNL1 (activated by RAC1); regulates the actin filament severing activity of FMNL1 and actin dynamics. Interacts (via SH3 domain) with FMNL3. Interacts with RAC1; specifically stimulates RAC1 GTPase activity. Interacts (via F-BAR domain) with HOMER1. Interacts with ROBO1 and ROBO2. Interacts with FASLG. Interacts with PRMT5. Post-translationally, methylation at Arg-927 is required for the stimulation of cell migration, dimerization and localization at the plasma membrane protrusions.

It localises to the cell membrane. The protein resides in the cell projection. Its subcellular location is the dendritic spine. The protein localises to the postsynaptic density. It is found in the postsynaptic cell membrane. It localises to the lamellipodium. The protein resides in the cytoplasmic vesicle. Its subcellular location is the phagosome. The protein localises to the nucleus. It is found in the cytoplasm. It localises to the cytosol. Its activity is regulated as follows. Activity is strongly inhibited by SRGAP2C, which heterodimerize with SRGAP2/SRGAP2A, thereby reducing SRGAP2/SRGAP2A levels through proteasome-dependent degradation. Functionally, postsynaptic RAC1 GTPase activating protein (GAP) that plays a key role in neuronal morphogenesis and migration mainly during development of the cerebral cortex. Regulates excitatory and inhibitory synapse maturation and density in cortical pyramidal neurons. SRGAP2/SRGAP2A limits excitatory and inhibitory synapse density through its RAC1-specific GTPase activating activity, while it promotes maturation of both excitatory and inhibitory synapses through its ability to bind to the postsynaptic scaffolding protein HOMER1 at excitatory synapses, and the postsynaptic protein GPHN at inhibitory synapses. Mechanistically, acts by binding and deforming membranes, thereby regulating actin dynamics to regulate cell migration and differentiation. Promotes cell repulsion and contact inhibition of locomotion: localizes to protrusions with curved edges and controls the duration of RAC1 activity in contact protrusions. In non-neuronal cells, may also play a role in cell migration by regulating the formation of lamellipodia and filopodia. In Homo sapiens (Human), this protein is SLIT-ROBO Rho GTPase-activating protein 2.